A 96-amino-acid chain; its full sequence is MNLRPLHDRVIIKRLDQESKTASGIIIPDAAAEKPDQGEILAVGPGKRDEAGKLNPLDVKVGDRVLFGKYAGQTVKVDGDELIVMREDDIMAVVQK.

Belongs to the GroES chaperonin family. As to quaternary structure, heptamer of 7 subunits arranged in a ring. Interacts with the chaperonin GroEL.

Its subcellular location is the cytoplasm. In terms of biological role, together with the chaperonin GroEL, plays an essential role in assisting protein folding. The GroEL-GroES system forms a nano-cage that allows encapsulation of the non-native substrate proteins and provides a physical environment optimized to promote and accelerate protein folding. GroES binds to the apical surface of the GroEL ring, thereby capping the opening of the GroEL channel. The sequence is that of Co-chaperonin GroES from Polynucleobacter asymbioticus (strain DSM 18221 / CIP 109841 / QLW-P1DMWA-1) (Polynucleobacter necessarius subsp. asymbioticus).